The following is a 107-amino-acid chain: Anti-adapter protein IraM (107 aa).

Belongs to the IraM/RssC family.

Its subcellular location is the cytoplasm. In terms of biological role, inhibits RpoS proteolysis by regulating RssB activity, thereby increasing the stability of the sigma stress factor RpoS during magnesium starvation. This Escherichia coli (strain K12 / MC4100 / BW2952) protein is Anti-adapter protein IraM.